The primary structure comprises 522 residues: Peptide chain release factor 3 (522 aa).

The tr-type G domain maps to 10-277 (ASRKTFAIIS…TFVDFAPSPS (268 aa)). GTP contacts are provided by residues 19-26 (SHPDAGKT), 87-91 (DTPGH), and 141-144 (NKMD).

The protein belongs to the TRAFAC class translation factor GTPase superfamily. Classic translation factor GTPase family. PrfC subfamily.

The protein resides in the cytoplasm. Functionally, increases the formation of ribosomal termination complexes and stimulates activities of RF-1 and RF-2. It binds guanine nucleotides and has strong preference for UGA stop codons. It may interact directly with the ribosome. The stimulation of RF-1 and RF-2 is significantly reduced by GTP and GDP, but not by GMP. The protein is Peptide chain release factor 3 of Listeria innocua serovar 6a (strain ATCC BAA-680 / CLIP 11262).